We begin with the raw amino-acid sequence, 37 residues long: Large ribosomal subunit protein bL36 (37 aa).

This sequence belongs to the bacterial ribosomal protein bL36 family.

The sequence is that of Large ribosomal subunit protein bL36 from Vibrio atlanticus (strain LGP32) (Vibrio splendidus (strain Mel32)).